Reading from the N-terminus, the 164-residue chain is MPAKAASAAASKKNSAPKSAVSKKVAKKGAPAAAAKPTKVVKVTKRKAYTRPQFRRPHTYRRPATVKPSSNVSAIKNKWDAFRIIRYPLTTDKAMKKIEENNTLTFIVDSRANKTEIKKAIRKLYQVKTVKVNTLIRPDGLKKAYIRLSASYDALDTANKMGLV.

The segment at 1–41 (MPAKAASAAASKKNSAPKSAVSKKVAKKGAPAAAAKPTKVV) is disordered.

This sequence belongs to the universal ribosomal protein uL23 family.

This protein binds to a specific region on the 26S rRNA. This Trypanosoma brucei brucei protein is Large ribosomal subunit protein uL23 (RPL23A).